Consider the following 98-residue polypeptide: Large ribosomal subunit protein uL23 (98 aa).

The protein belongs to the universal ribosomal protein uL23 family. In terms of assembly, part of the 50S ribosomal subunit. Contacts protein L29, and trigger factor when it is bound to the ribosome.

Its function is as follows. One of the early assembly proteins it binds 23S rRNA. One of the proteins that surrounds the polypeptide exit tunnel on the outside of the ribosome. Forms the main docking site for trigger factor binding to the ribosome. The sequence is that of Large ribosomal subunit protein uL23 from Ruegeria pomeroyi (strain ATCC 700808 / DSM 15171 / DSS-3) (Silicibacter pomeroyi).